The sequence spans 564 residues: Threonine--tRNA ligase (564 aa).

The tract at residues Asp167–Pro464 is catalytic. Residues Cys260, His311, and His441 each contribute to the Zn(2+) site.

This sequence belongs to the class-II aminoacyl-tRNA synthetase family. Homodimer. Requires Zn(2+) as cofactor.

The protein localises to the cytoplasm. The catalysed reaction is tRNA(Thr) + L-threonine + ATP = L-threonyl-tRNA(Thr) + AMP + diphosphate + H(+). Functionally, catalyzes the attachment of threonine to tRNA(Thr) in a two-step reaction: L-threonine is first activated by ATP to form Thr-AMP and then transferred to the acceptor end of tRNA(Thr). Also edits incorrectly charged L-seryl-tRNA(Thr). The polypeptide is Threonine--tRNA ligase (Mycoplasma genitalium (strain ATCC 33530 / DSM 19775 / NCTC 10195 / G37) (Mycoplasmoides genitalium)).